Here is a 179-residue protein sequence, read N- to C-terminus: Large ribosomal subunit protein uL5 (179 aa).

The protein belongs to the universal ribosomal protein uL5 family. In terms of assembly, part of the 50S ribosomal subunit; part of the 5S rRNA/L5/L18/L25 subcomplex. Contacts the 5S rRNA and the P site tRNA. Forms a bridge to the 30S subunit in the 70S ribosome.

This is one of the proteins that bind and probably mediate the attachment of the 5S RNA into the large ribosomal subunit, where it forms part of the central protuberance. In the 70S ribosome it contacts protein S13 of the 30S subunit (bridge B1b), connecting the 2 subunits; this bridge is implicated in subunit movement. Contacts the P site tRNA; the 5S rRNA and some of its associated proteins might help stabilize positioning of ribosome-bound tRNAs. The polypeptide is Large ribosomal subunit protein uL5 (Maridesulfovibrio salexigens (strain ATCC 14822 / DSM 2638 / NCIMB 8403 / VKM B-1763) (Desulfovibrio salexigens)).